Here is a 351-residue protein sequence, read N- to C-terminus: Very-long-chain 3-oxoacyl-CoA reductase (351 aa).

Residues 26–46 (LLWCAFTVGAVKLTTFMLSLI) form a helical membrane-spanning segment. NADP(+) contacts are provided by leucine 72, aspartate 126, asparagine 153, tyrosine 225, lysine 229, valine 258, and serine 260. The active-site Proton donor is the tyrosine 225. The Lowers pKa of active site Tyr role is filled by lysine 229.

It belongs to the short-chain dehydrogenases/reductases (SDR) family.

The protein localises to the endoplasmic reticulum membrane. It catalyses the reaction a very-long-chain (3R)-3-hydroxyacyl-CoA + NADP(+) = a very-long-chain 3-oxoacyl-CoA + NADPH + H(+). It participates in lipid metabolism; fatty acid biosynthesis. Functionally, component of the microsomal membrane bound fatty acid elongation system, which produces the 26-carbon very long-chain fatty acids (VLCFA) from palmitate. Catalyzes the reduction of the 3-ketoacyl-CoA intermediate that is formed in each cycle of fatty acid elongation. VLCFAs serve as precursors for ceramide and sphingolipids. In Eremothecium gossypii (strain ATCC 10895 / CBS 109.51 / FGSC 9923 / NRRL Y-1056) (Yeast), this protein is Very-long-chain 3-oxoacyl-CoA reductase.